A 288-amino-acid polypeptide reads, in one-letter code: tRNA dimethylallyltransferase (288 aa).

2-9 is a binding site for ATP; the sequence is GPTAAGKS. 4–9 is a binding site for substrate; sequence TAAGKS. Residues 27–30 are interaction with substrate tRNA; sequence DSMQ.

Belongs to the IPP transferase family. Monomer. The cofactor is Mg(2+).

It catalyses the reaction adenosine(37) in tRNA + dimethylallyl diphosphate = N(6)-dimethylallyladenosine(37) in tRNA + diphosphate. Its function is as follows. Catalyzes the transfer of a dimethylallyl group onto the adenine at position 37 in tRNAs that read codons beginning with uridine, leading to the formation of N6-(dimethylallyl)adenosine (i(6)A). In Frankia alni (strain DSM 45986 / CECT 9034 / ACN14a), this protein is tRNA dimethylallyltransferase.